Consider the following 165-residue polypeptide: Fimbrial protein (165 aa).

Positions 1–21 (MRKSASAVAVLALIACGSAHA) are cleaved as a signal peptide.

It localises to the fimbrium. In terms of biological role, structural subunit of the sef14 fimbriae. This chain is Fimbrial protein (sefA), found in Salmonella enteritidis.